We begin with the raw amino-acid sequence, 203 residues long: Hydra actinoporin-like toxin 2 (203 aa).

The signal sequence occupies residues 1–21; it reads MLSYLCFGCFLVSASLEIACG. The short motif at 175-177 is the Cell attachment site element; the sequence is RGG.

It belongs to the actinoporin family. HALT subfamily. Octamer or nonamer in membranes. Monomer in the soluble state. In vitro, interacts with folate receptor alpha (of target organism). In terms of tissue distribution, strongly expressed in the gland and mucous cells in the endoderm.

Its subcellular location is the nematocyst. The protein resides in the secreted. It is found in the target cell membrane. Its function is as follows. Pore-forming protein that forms hydrophilic pores and causes cytolysis. Compared to equinatoxin-2 (AC P61914), it reveals lower cytolysis activity (5-12-fold difference, tested on erythrocytes), a larger pore size (probably 2-3 nm) and different affinity to membrane lipids (100-fold lower affinity to sphingomyelin). Binds to sulfatides (SFT). Shows cytolytic activity on HeLa cells, with a different potency than its paralogs (from most potent to less potent: HALT-4&gt;HALT-6~HALT-1&gt;HALT-3&gt;HALT-7&gt;HALT-2). Pore formation is a multi-step process that involves specific recognition of membrane lipid by a protein aromatic residues rich region, firm binding to the membrane (mainly driven by hydrophobic interactions) accompanied by the transfer of the N-terminal region to the lipid-water interface and finally pore formation after oligomerization of monomers. In vitro, binds to the folate receptor alpha (FOLR1), a GPI-anchored membrane protein that plays a major role in the uptake of folate/folic acid into cells via endocytosis, suggesting a possible involvement of this receptor in the mechanism of HALT-1-induced cell lysis. In vivo, does not cause visible paralysis in larvae of the blowfly Sarcophaga faculata, the most common arthropod prey of Hydra. The polypeptide is Hydra actinoporin-like toxin 2 (Hydra vulgaris (Hydra)).